A 429-amino-acid chain; its full sequence is 3-phosphoshikimate 1-carboxyvinyltransferase (429 aa).

3 residues coordinate 3-phosphoshikimate: K22, S23, and R27. Phosphoenolpyruvate is bound at residue K22. Residues G94 and R122 each contribute to the phosphoenolpyruvate site. 4 residues coordinate 3-phosphoshikimate: S167, Q169, D315, and K342. Phosphoenolpyruvate is bound at residue Q169. D315 acts as the Proton acceptor in catalysis. Residues R346 and R388 each contribute to the phosphoenolpyruvate site.

This sequence belongs to the EPSP synthase family. In terms of assembly, monomer.

The protein localises to the cytoplasm. The enzyme catalyses 3-phosphoshikimate + phosphoenolpyruvate = 5-O-(1-carboxyvinyl)-3-phosphoshikimate + phosphate. The protein operates within metabolic intermediate biosynthesis; chorismate biosynthesis; chorismate from D-erythrose 4-phosphate and phosphoenolpyruvate: step 6/7. Functionally, catalyzes the transfer of the enolpyruvyl moiety of phosphoenolpyruvate (PEP) to the 5-hydroxyl of shikimate-3-phosphate (S3P) to produce enolpyruvyl shikimate-3-phosphate and inorganic phosphate. This Geobacter sulfurreducens (strain ATCC 51573 / DSM 12127 / PCA) protein is 3-phosphoshikimate 1-carboxyvinyltransferase.